Here is a 633-residue protein sequence, read N- to C-terminus: tRNA uridine 5-carboxymethylaminomethyl modification enzyme MnmG (633 aa).

FAD contacts are provided by residues 15–20, Val127, and Ser182; that span reads GAGHAG. 276–290 is an NAD(+) binding site; it reads GPRYCPSIEDKIVRF. FAD is bound at residue Gln373.

It belongs to the MnmG family. As to quaternary structure, homodimer. Heterotetramer of two MnmE and two MnmG subunits. The cofactor is FAD.

Its subcellular location is the cytoplasm. In terms of biological role, NAD-binding protein involved in the addition of a carboxymethylaminomethyl (cmnm) group at the wobble position (U34) of certain tRNAs, forming tRNA-cmnm(5)s(2)U34. In Streptococcus thermophilus (strain ATCC BAA-491 / LMD-9), this protein is tRNA uridine 5-carboxymethylaminomethyl modification enzyme MnmG.